The chain runs to 91 residues: Small nuclear ribonucleoprotein F (91 aa).

Residues A8–E81 form the Sm domain.

This sequence belongs to the snRNP Sm proteins family. SmF/LSm6 subfamily. In terms of assembly, core component of the spliceosomal U1, U2, U4 and U5 small nuclear ribonucleoproteins (snRNPs), the building blocks of the spliceosome. Most spliceosomal snRNPs contain a common set of Sm proteins, SNRPB, SNRPD1, SNRPD2, SNRPD3, SNRPE, SNRPF and SNRPG that assemble in a heptameric protein ring on the Sm site of the small nuclear RNA to form the core snRNP. Component of the U1 snRNP. Component of the U4/U6-U5 tri-snRNP complex. Component of the U7 snRNP complex. Component of the U11/U12 snRNPs that are part of the U12-type spliceosome. Part of the SMN-Sm complex that catalyzes core snRNPs assembly.

Its subcellular location is the cytoplasm. It is found in the cytosol. It localises to the nucleus. Plays a role in pre-mRNA splicing as a core component of the spliceosomal U1, U2, U4 and U5 small nuclear ribonucleoproteins (snRNPs), the building blocks of the spliceosome. Component of both the pre-catalytic spliceosome B complex and activated spliceosome C complexes. Is also a component of the minor U12 spliceosome. This is Small nuclear ribonucleoprotein F (snrpf) from Dictyostelium discoideum (Social amoeba).